A 665-amino-acid chain; its full sequence is Translation factor guf1, mitochondrial (665 aa).

Residues 1–53 constitute a mitochondrion transit peptide; the sequence is MRGCLQVLRWLSTSPARRPVSSGLRLRSYEIVSPSILRPFTSTVRRQAQASRN. Residues 67–247 form the tr-type G domain; that stretch reads ERFRNFCIVA…TVIERIPAPV (181 aa). GTP is bound by residues 76–83, 140–144, and 194–197; these read AHVDHGKS, DTPGH, and NKVD.

It belongs to the TRAFAC class translation factor GTPase superfamily. Classic translation factor GTPase family. LepA subfamily.

Its subcellular location is the mitochondrion inner membrane. The catalysed reaction is GTP + H2O = GDP + phosphate + H(+). Promotes mitochondrial protein synthesis. May act as a fidelity factor of the translation reaction, by catalyzing a one-codon backward translocation of tRNAs on improperly translocated ribosomes. Binds to mitochondrial ribosomes in a GTP-dependent manner. The chain is Translation factor guf1, mitochondrial (guf1) from Talaromyces stipitatus (strain ATCC 10500 / CBS 375.48 / QM 6759 / NRRL 1006) (Penicillium stipitatum).